The primary structure comprises 359 residues: MNIYDQLQAVEDRYEELGELLSDPDVVSDTKRFMELSREEANTRETVTAYREYKQVIQTISDAEEMIKDASGDPELEEMAKEELKESKAAKEEYEEKLKILLLPKDPNDDKNIILEIRGAAGGDEAALFAGDLLTMYQKYAETQGWRFEVMESSVNGVGGIKEVVAMVSGQSVYSKLKYESGAHRVQRVPVTESQGRVHTSTATVLVMPEVEEVEYDIDPKDLRVDIYHASGAGGQNVNKVATAVRMVHIPTGIKVEMQEERTQQKNRDKAMKIIRARVADHFAQIAQDEQDAERKSTVGTGDRSERIRTYNFPQNRVTDHRIGLTLQKLDTILSGKMDEVIDALVMYDQTKKLESLNN.

Glutamine 236 is subject to N5-methylglutamine.

Belongs to the prokaryotic/mitochondrial release factor family. In terms of processing, methylated by PrmC. Methylation increases the termination efficiency of RF1.

The protein resides in the cytoplasm. Functionally, peptide chain release factor 1 directs the termination of translation in response to the peptide chain termination codons UAG and UAA. This is Peptide chain release factor 1 from Streptococcus pyogenes serotype M1.